We begin with the raw amino-acid sequence, 1070 residues long: DNA-directed RNA polymerase subunit beta (1070 aa).

It belongs to the RNA polymerase beta chain family. In terms of assembly, in plastids the minimal PEP RNA polymerase catalytic core is composed of four subunits: alpha, beta, beta', and beta''. When a (nuclear-encoded) sigma factor is associated with the core the holoenzyme is formed, which can initiate transcription.

The protein localises to the plastid. It localises to the chloroplast. The catalysed reaction is RNA(n) + a ribonucleoside 5'-triphosphate = RNA(n+1) + diphosphate. Functionally, DNA-dependent RNA polymerase catalyzes the transcription of DNA into RNA using the four ribonucleoside triphosphates as substrates. The sequence is that of DNA-directed RNA polymerase subunit beta from Citrus sinensis (Sweet orange).